A 313-amino-acid polypeptide reads, in one-letter code: Olfactory receptor 56A5 (313 aa).

The Extracellular portion of the chain corresponds to 1 to 33 (MTLPSNNSTSPVFEFFLICFPSFQSWQHWLSLP). N-linked (GlcNAc...) asparagine glycans are attached at residues asparagine 6 and asparagine 7. The chain crosses the membrane as a helical span at residues 34 to 54 (LSLLFLLAMGANATLLITIYL). Topologically, residues 55–67 (EASLHQPLYYLLS) are cytoplasmic. A helical transmembrane segment spans residues 68–88 (LLSLLDIVLCLTVIPKVLAIF). Residues 89–100 (WFDLRSISFPAC) lie on the Extracellular side of the membrane. Cysteine 100 and cysteine 182 are oxidised to a cystine. Residues 101-121 (FLQVFIMNSFLTMESCTFMIM) form a helical membrane-spanning segment. Topologically, residues 122–146 (AYDRYVAICKPLQYSSIITDQFVAR) are cytoplasmic. A helical transmembrane segment spans residues 147–167 (AAIFVVARNGLLTMPIPILSS). Over 168–203 (RLRYCAGHIIKNCICTNVSVSKLSCDDITLNQSYQF) the chain is Extracellular. N-linked (GlcNAc...) asparagine glycosylation is found at asparagine 184 and asparagine 198. The chain crosses the membrane as a helical span at residues 204–224 (VIGWTLLGSDLILIVLSYFFI). Over 225-246 (LKTVLRIKGEGDMAKALGTCGS) the chain is Cytoplasmic. Residues 247–267 (HFILILFFTTVLLVLVITNLA) traverse the membrane as a helical segment. Residues 268-276 (RKRIPPDVP) lie on the Extracellular side of the membrane. Residues 277–297 (ILLNILHHLIPPALNPIVYGV) form a helical membrane-spanning segment. The Cytoplasmic segment spans residues 298–313 (RTKEIKQGIQNLLRRL).

Belongs to the G-protein coupled receptor 1 family.

Its subcellular location is the cell membrane. In terms of biological role, odorant receptor. In Homo sapiens (Human), this protein is Olfactory receptor 56A5 (OR56A5).